A 109-amino-acid chain; its full sequence is Large ribosomal subunit protein uL24 (109 aa).

Belongs to the universal ribosomal protein uL24 family. As to quaternary structure, part of the 50S ribosomal subunit.

In terms of biological role, one of two assembly initiator proteins, it binds directly to the 5'-end of the 23S rRNA, where it nucleates assembly of the 50S subunit. Functionally, one of the proteins that surrounds the polypeptide exit tunnel on the outside of the subunit. The polypeptide is Large ribosomal subunit protein uL24 (Rickettsia canadensis (strain McKiel)).